A 127-amino-acid chain; its full sequence is ATP synthase epsilon chain (127 aa).

It belongs to the ATPase epsilon chain family. In terms of assembly, F-type ATPases have 2 components, CF(1) - the catalytic core - and CF(0) - the membrane proton channel. CF(1) has five subunits: alpha(3), beta(3), gamma(1), delta(1), epsilon(1). CF(0) has three main subunits: a, b and c.

Its subcellular location is the cell inner membrane. Functionally, produces ATP from ADP in the presence of a proton gradient across the membrane. The protein is ATP synthase epsilon chain of Leptospira interrogans serogroup Icterohaemorrhagiae serovar copenhageni (strain Fiocruz L1-130).